Here is a 297-residue protein sequence, read N- to C-terminus: Phosphoribosylaminoimidazole-succinocarboxamide synthase (297 aa).

This sequence belongs to the SAICAR synthetase family.

The enzyme catalyses 5-amino-1-(5-phospho-D-ribosyl)imidazole-4-carboxylate + L-aspartate + ATP = (2S)-2-[5-amino-1-(5-phospho-beta-D-ribosyl)imidazole-4-carboxamido]succinate + ADP + phosphate + 2 H(+). It functions in the pathway purine metabolism; IMP biosynthesis via de novo pathway; 5-amino-1-(5-phospho-D-ribosyl)imidazole-4-carboxamide from 5-amino-1-(5-phospho-D-ribosyl)imidazole-4-carboxylate: step 1/2. This Corynebacterium glutamicum (strain R) protein is Phosphoribosylaminoimidazole-succinocarboxamide synthase.